Consider the following 96-residue polypeptide: Putative membrane protein insertion efficiency factor (96 aa).

Positions 68-96 (DPVPEHFPARHPRPQGSPPTDHPPTDQPS) are disordered. The span at 82–96 (QGSPPTDHPPTDQPS) shows a compositional bias: pro residues.

Belongs to the UPF0161 family.

The protein localises to the cell membrane. Could be involved in insertion of integral membrane proteins into the membrane. This is Putative membrane protein insertion efficiency factor from Deinococcus radiodurans (strain ATCC 13939 / DSM 20539 / JCM 16871 / CCUG 27074 / LMG 4051 / NBRC 15346 / NCIMB 9279 / VKM B-1422 / R1).